A 215-amino-acid chain; its full sequence is Probable phosphoglycerate mutase GpmB (215 aa).

Substrate-binding positions include arginine 8–asparagine 15, glutamine 21–glycine 22, arginine 58, lysine 60, glutamate 82–methionine 85, arginine 104–arginine 105, and glycine 151–isoleucine 152. Histidine 9 acts as the Tele-phosphohistidine intermediate in catalysis. Glutamate 82 functions as the Proton donor/acceptor in the catalytic mechanism.

This sequence belongs to the phosphoglycerate mutase family. GpmB subfamily.

The enzyme catalyses (2R)-2-phosphoglycerate = (2R)-3-phosphoglycerate. The protein operates within carbohydrate degradation; glycolysis; pyruvate from D-glyceraldehyde 3-phosphate: step 3/5. The chain is Probable phosphoglycerate mutase GpmB from Salmonella paratyphi C (strain RKS4594).